Consider the following 101-residue polypeptide: uncharacterized protein (101 aa).

A helical membrane pass occupies residues 72-94 (ILCPSFLNYSFINIYCFGPYTMV).

It localises to the membrane. This is an uncharacterized protein from Schizosaccharomyces pombe (strain 972 / ATCC 24843) (Fission yeast).